Reading from the N-terminus, the 115-residue chain is uncharacterized protein (115 aa).

Residues 36-56 (SFFSLGLIACFCIFLIIVLSE) traverse the membrane as a helical segment.

It localises to the membrane. This is an uncharacterized protein from Saccharomyces cerevisiae (strain ATCC 204508 / S288c) (Baker's yeast).